The following is a 412-amino-acid chain: Probable ribonuclease FAU-1 (412 aa).

It belongs to the FAU-1 family.

Probable RNase involved in rRNA stability through maturation and/or degradation of precursor rRNAs. Binds to RNA in loop regions with AU-rich sequences. This chain is Probable ribonuclease FAU-1, found in Sulfurisphaera tokodaii (strain DSM 16993 / JCM 10545 / NBRC 100140 / 7) (Sulfolobus tokodaii).